Reading from the N-terminus, the 133-residue chain is Large ribosomal subunit protein eL32 (133 aa).

The protein belongs to the eukaryotic ribosomal protein eL32 family.

The chain is Large ribosomal subunit protein eL32 (rpl32) from Dictyostelium discoideum (Social amoeba).